A 96-amino-acid chain; its full sequence is MRLSFIIVAVSLLAGGSGAAGAAYPASDVLTSRGTNEGARTGKRSLRYDSNVERTGEEDDEIKFLPDAEKLAQLAKLAHTNKADSLGTSLKNFLSN.

The first 19 residues, 1–19 (MRLSFIIVAVSLLAGGSGA), serve as a signal peptide directing secretion. Residues 27 to 59 (SDVLTSRGTNEGARTGKRSLRYDSNVERTGEED) are disordered. The short motif at 44–59 (RSLRYDSNVERTGEED) is the RxLR-dEER element. Positions 46 to 55 (LRYDSNVERT) are enriched in basic and acidic residues.

Belongs to the RxLR effector family.

It is found in the secreted. The protein resides in the host nucleus. It localises to the host cytoplasm. Effector that enhances P.infestans colonization of Nicotiana benthamiana leaves. The sequence is that of RxLR effector protein PITG_11507 from Phytophthora infestans (strain T30-4) (Potato late blight agent).